The chain runs to 147 residues: Arginine repressor (147 aa).

It belongs to the ArgR family.

Its subcellular location is the cytoplasm. It functions in the pathway amino-acid biosynthesis; L-arginine biosynthesis [regulation]. In terms of biological role, regulates arginine biosynthesis genes. In Chlamydia felis (strain Fe/C-56) (Chlamydophila felis), this protein is Arginine repressor.